Consider the following 208-residue polypeptide: Glutathione S-transferase P (208 aa).

Residues 1–78 (MTLKLTYFDI…HLARLNGLNG (78 aa)) form the GST N-terminal domain. Glutathione is bound by residues Tyr-7, Trp-38, Lys-42, 49-50 (QV), and 62-63 (QS). One can recognise a GST C-terminal domain in the interval 80-202 (NETETTFIDM…NKRAAINPPV (123 aa)).

Belongs to the GST superfamily. Pi family. As to quaternary structure, homodimer. As to expression, expressed in dopaminergic (DA) neuron (at protein levels).

It catalyses the reaction RX + glutathione = an S-substituted glutathione + a halide anion + H(+). In terms of biological role, conjugation of reduced glutathione to a wide number of exogenous and endogenous hydrophobic electrophiles. Prevents dopaminergic CEP neuron degeneration in response to Mn(2+). The polypeptide is Glutathione S-transferase P (gst-1) (Caenorhabditis elegans).